The chain runs to 302 residues: Methionyl-tRNA formyltransferase (302 aa).

108–111 (SLLP) contacts (6S)-5,6,7,8-tetrahydrofolate. A compositionally biased stretch (basic and acidic residues) spans 279 to 288 (KRPMEPEEFL). Positions 279 to 302 (KRPMEPEEFLRGFPLPEGSRAHTS) are disordered.

This sequence belongs to the Fmt family.

The catalysed reaction is L-methionyl-tRNA(fMet) + (6R)-10-formyltetrahydrofolate = N-formyl-L-methionyl-tRNA(fMet) + (6S)-5,6,7,8-tetrahydrofolate + H(+). Its function is as follows. Attaches a formyl group to the free amino group of methionyl-tRNA(fMet). The formyl group appears to play a dual role in the initiator identity of N-formylmethionyl-tRNA by promoting its recognition by IF2 and preventing the misappropriation of this tRNA by the elongation apparatus. The sequence is that of Methionyl-tRNA formyltransferase from Cereibacter sphaeroides (strain ATCC 17023 / DSM 158 / JCM 6121 / CCUG 31486 / LMG 2827 / NBRC 12203 / NCIMB 8253 / ATH 2.4.1.) (Rhodobacter sphaeroides).